The sequence spans 122 residues: Large ribosomal subunit protein uL14 (122 aa).

Belongs to the universal ribosomal protein uL14 family. In terms of assembly, part of the 50S ribosomal subunit. Forms a cluster with proteins L3 and L19. In the 70S ribosome, L14 and L19 interact and together make contacts with the 16S rRNA in bridges B5 and B8.

Functionally, binds to 23S rRNA. Forms part of two intersubunit bridges in the 70S ribosome. The protein is Large ribosomal subunit protein uL14 of Streptomyces coelicolor (strain ATCC BAA-471 / A3(2) / M145).